Consider the following 229-residue polypeptide: Lipoprotein-releasing system ATP-binding protein LolD (229 aa).

An ABC transporter domain is found at 6–229 (LELDAIERTY…DGHLTPYVPA (224 aa)). Position 42–49 (42–49 (GPSGSGKS)) interacts with ATP.

This sequence belongs to the ABC transporter superfamily. Lipoprotein translocase (TC 3.A.1.125) family. In terms of assembly, the complex is composed of two ATP-binding proteins (LolD) and two transmembrane proteins (LolC and LolE).

The protein resides in the cell inner membrane. In terms of biological role, part of the ABC transporter complex LolCDE involved in the translocation of mature outer membrane-directed lipoproteins, from the inner membrane to the periplasmic chaperone, LolA. Responsible for the formation of the LolA-lipoprotein complex in an ATP-dependent manner. In Maricaulis maris (strain MCS10) (Caulobacter maris), this protein is Lipoprotein-releasing system ATP-binding protein LolD.